The following is a 423-amino-acid chain: UPF0229 protein VV2350 (423 aa).

The interval 81 to 111 (QFITGDKIERPKGGQGGGGAGDGDASADGEG) is disordered. The span at 93-102 (GGQGGGGAGD) shows a compositional bias: gly residues.

It belongs to the UPF0229 family.

The sequence is that of UPF0229 protein VV2350 from Vibrio vulnificus (strain YJ016).